Consider the following 3930-residue polypeptide: MQDLIAIVGSACRFPGQSDSPSKLWTRLKEPIDLRKTFPPQRLNLARFYHPDGEHHGSTDVRGTSYLLSEDPRQFDASFFNINPREAEGMDPQQRLLLETAFEALEAAGYSLEAMNGSKTSVHVGVMNSDFSNIQLRDPEVLPTYNATGTAISILSNRLSYFFNLKGPSVTIDTACSSSLVALHQAVQGLRAGDATAAIVAGANLIFDPAMYIAESSLHMLSPDSCSRMWDKDANGYARGEGVGVLVLKPLSRAIMDGDHVEAVIRSTGVNSDGRTKGITMPNAESQTELIRQTYRDAGLDPIRDRCQYFECHGTGTATGDPIEARAVHDAFFPTETRTASNTLIPDGKLYVGSVKTIIGHLEGCAGIAGVLKAVLAIKNRTIPPNMHFHEPNPRVIPFCDRLEIPTVPIPWPDTGRSPLRASINSFGFGGTNAHAIIEGYDALSSPVREATITPDDLFIGPLLFSANSSSSLVANVKNMAERIRSDPSIDLESLVWTLYARRSVLPVKAFFTGGTVQRLLNFMDRFVAESEETTSSTAGIKYQPLNPTETPGILGIFTGQGAQWALMGFSLLQQNHVFRAAIERCQAALATLHDSPSWSLLDELVKGADESRIGEAALSQPLCTALQIGLVDMLHSAGIKLDAVVGHSSGEIAAVYAAGIINADAAIKIAYYRGYYAKLAAGARGQAGRMMATAMSFDEAEEFCAQPQWRGRLAAAASNSPQSVTLSGDIDAIEEALQLFEAEKKFARILRTDTAYHSHHMQPCAERYLKSLQACQIKVSPPRKDCVWISSVRGDTQLLEGDLSTLADQYWVDNMCNPVLFSQAVETSIWNGGPFDVAVELGPHPALKGPVEQTIKAVYGPIPAYAGLMRRGDNEIEAFSGGVGFVWSRLGPDYVDMSGYRKGFIGADRLRPQVLKDLPVYCWDHSKLYWKESRISRQYRLRQDTPHELLGRRVPDDSDDSRRWRNVLRLSELPWIRGHVFQGQVLFPGAGYVAMALEAARELTEGRPATLFEIENVSLRRALVISEQAGIETAFTARVIDAKEGRNDTNRLEADFACYFCSAEGNEPLVKACTGRLIINYGDPAAEALPQRTRLPSNNVPVDMGRFYDAMNSVGLDYQGIFRGLVHGKRSLGCSSVKAAWGEDMQIDNYVVNPGFLDVAFQSVYTAFSSPASGEIWAPYLPIHIERLAVNPNVSYRSAKDEVQMEADAFVTVSNSTLLKGDIQLYQIDSQHAAIQVEGISMKSMSEPQPENDRCLFSETVWGPDVSLGVSEVTSRATEDDTPLVEALDRVSLFYWQNLLQEVGAEEIAQFQWYHQRMFDAVRFQVSSVRSGQHPIAKPEWLEDDWETILAVSEPYASRVDMRLIHAVGENLASVVREDTQLLEVMVQDDMLNRFYMEGYGFSVINNAVSDALEQITFKYPHANILEIGAGTGGTTRSILDRIGSRYGSYTYTDISPAFFEAAAEKFEDAREKIQFKVLDVEKEVGAQGFDEHGYDVIVAANVLHATRKLEETMKNARALLKPGGYLVLMEITGPDVLRTQFIMGGLPGWWYGVDDGRVLSPAISAQQWNQLLLDTGFSGLDCLAPDMLDEYKHSFSLMVSQAIDEKIQMLRDPVLSKTLLPAADVLIIGGRTHSNVIHEIRRYLSAWTSRVEVWDRIQTKQLDQLAEFENIICLEELDQPLFSTTMTSETLLALQKVLSGTKNVVWAINSAKSQNPHVNMTVGLGRAMRTEVPGLNLLFVDIDAVENPIACAQLLSQMLLQLRTGSLTAAENTLWAAELEIRVQDGRRLIPRVLPMTQMNETYNASRRVISKPVDIETTCVKMEDSAGSLRLVPGACMVDGPVQRGHNRLRIHRSLPLAFGGGTPCYLCSGDLRENGLPALALSTSNANLADIPNDMVFALDQDQPCDAAMLEATGRQLLARDICNRLPASNRILVYQPSHDFAQALLLTGRHFSFVSADKASCFSDWVYIHSRASRRAIQSRLPKDFDALIDCTGELPENLIACLSRNCRVLNMTLHQLDGSLLGPAYSAALAHVSSSSIGPSIRVKDLPLATPSKLPMVDWTGVDTVELTLQPLSMRKLFSSSATYLLAGMTGDLGLSLCRWMIDNGARNIALTSRNPNVGEELLQDMRRSGADIRVFRNDITDQNAVRTLVENIRLSMPPIAGVFNACMVLRDGLFSEMDVDTLNDPLAPKVDGSKILDDIFQDDSLDFFVLFSSLASIIGNAANPTTTLQTCSSLVLPPTAARRVWQPSPHNSSRQHEIILGLEPFIDSPNATKRPPWEHNPMFSHYVSRPLLQETPAATTVEAAADVKQLLRSTVSGEAVIPIVQEAFARKLESMMQLPANSINLNVPLIDLGCDSLLAIEIRRWFIKELGIDVPVLKVLSGDTTAQICEDAVRQFLALQLEKQDTVAPNMTEKPETKSHPSSNATIIDNDALDKADAANGDYESSSQGDDSRGNSSSSSSHTSPSIQATTPDIKPNTPVPLDVDADPLGRGFQRTMIRAEPASFAQSRLWFLTQYLHDPTTYNVTVRYDVRGNLPASRIVSSLNRTICHHQSLQTCFFMDSDKETLMQGVLSPSYSSIKHIPSGSEQTVREEYNRLRSRVWDLQKGETFAVTVVSLSPEQHTIIFGYHHIVMDGVSWHLFLRDLDLAYRLRPLPSIEMEYIDWSKKQFQSAQRGDFTRPLEYWRKQHSPPPSVMPLLPMAQTSSRKPLTSYDSHVISVQIDRQLVSHIRLVSQSLGVTPFHFHLAVIQSILCRLLKTEDLCIGVVDANRTSEAHSGTVGFFLNLLPVRFTTREHSTFQDLVSSTKRTILGAISNSEAPFDLILEDLKVLRSIEHSPLFQVAVNYRMGAMLQVPLGDGTMEVAAADDAKNPYDLSFGITETSTGTCLLELTSQKQLYTEQSTELLLQMYMDVLRASSDNPSLPVNQLPVTLEPSTGKALAVAKGPRAEYSWPNTLWERYDAIRKSFPEETAIKDGKSELSYSQLTRSVEKLAAMLISQGVTAGDSVGVLLHPSIDAIACMLALLRVGCIYTPLDTRLPVARLSIIVNRSKSSLVLYHASTHDVALELGKFSKLANVEDMCESGQAQVPAIAPQSNPASFLFYTSGSTGTPKGILLSQQNFVNHLAAKTDKLNLGREVVLQQSSLGFDMSVVQTFCALGNGGTLVIAPKEARGDPIALSTIMAKERVTLTIATPSEYSLLLRFGLEQLQRPYSWRHACMGGEVVSRQLVQQFCQLDHPDLQLTNCYGPTEITAAATFQDISLQMKDQSTTDGSLVGKALPNYSVYIMDASSGSPVPIGVTGEICIGGAGVSLGYLNSLEQTDAKFVRDPFASPEDITRGWTKMYRTGDMGCLTEDGTLIFMGRMDGDNQVKLNGLRIELDEIANSILTTGNDLVSEAVVTVHSGSGSGSPLLVAHVVPLGDNVDNSRLQQLARDLPLPQYMLPSVVVSLDRLPINANGKVDRKAIMALPLPTQRTESAAGTGTDTARHLSLAEGELRLLWEKVLPASGGPSRLDADSDFFMRGGTSMLLVRLQGAIKESIGVSIPVAELYQFPTLGQMARRISRRKEDHQASHATVINWDSETALTQDLIYAAKNQFSTRQTKAHDRQDILLTGSTSFLGKNILQSLLHNPLVERVHCVAVPAEDIPRLPASEKISIYTGSLLTPSLGLTKTEIAVLQSSLDVIIHAGSTGHCLNNYSSLRASNVDSTKFLAAIALLCRIPIHFISSNRVTLLSGSTSLPPASVSSSLPNTDGSEGFTASKWASERLLESVANLASGLPVTIHRPCAVFGEEAPNEDALNALLKYSKLTRCVPRFENFEGYLDFEDVHRVAATIAADALSAESRESKSAARVRHHSSGHKVSMKDFKGRMETLFACPFKEVSMAEWTERALQAGIDPLITGYLEAMTMKGEIIRFPYMGEAGSL.

A Ketosynthase family 3 (KS3) domain is found at 2-440 (QDLIAIVGSA…GTNAHAIIEG (439 aa)). Residues C176, H313, and H361 each act as for beta-ketoacyl synthase activity in the active site. The tract at residues 557–879 (IFTGQGAQWA…MRRGDNEIEA (323 aa)) is malonyl-CoA:ACP transacylase (MAT) domain. The segment at 948-1085 (HELLGRRVPD…GRLIINYGDP (138 aa)) is N-terminal hotdog fold. The dehydratase (DH) domain stretch occupies residues 948-1251 (HELLGRRVPD…SMKSMSEPQP (304 aa)). In terms of domain architecture, PKS/mFAS DH spans 948 to 1252 (HELLGRRVPD…MKSMSEPQPE (305 aa)). H980 serves as the catalytic Proton acceptor; for dehydratase activity. Positions 1100–1252 (NVPVDMGRFY…MKSMSEPQPE (153 aa)) are C-terminal hotdog fold. Catalysis depends on D1159, which acts as the Proton donor; for dehydratase activity. The segment at 1389–1588 (QDDMLNRFYM…FSGLDCLAPD (200 aa)) is methyltransferase (MT) domain. The interval 2088–2229 (ATYLLAGMTG…SLASIIGNAA (142 aa)) is ketoreductase (KR) domain. Residues 2326–2403 (AVIPIVQEAF…QICEDAVRQF (78 aa)) form the Carrier 1 domain. S2363 bears the O-(pantetheine 4'-phosphoryl)serine mark. Disordered regions lie at residues 2414–2433 (VAPN…SNAT) and 2444–2494 (DAAN…VDAD). A compositionally biased stretch (low complexity) spans 2445–2473 (AANGDYESSSQGDDSRGNSSSSSSHTSPS). Residues 2509-2937 (PASFAQSRLW…SLPVNQLPVT (429 aa)) are condensation (C) domain. Residues 2971 to 3371 (KSFPEETAIK…GTLIFMGRMD (401 aa)) form an adenylation (A) (KR) domain region. A reductase (RED) domain region spans residues 2971–3371 (KSFPEETAIK…GTLIFMGRMD (401 aa)). Residues 3493–3572 (RHLSLAEGEL…QMARRISRRK (80 aa)) enclose the Carrier 2 domain. S3532 bears the O-(pantetheine 4'-phosphoryl)serine mark.

It in the C-terminal section; belongs to the NRP synthetase family.

It functions in the pathway secondary metabolite biosynthesis. In terms of biological role, hybrid PKS-NRPS synthetase; part of the gene cluster that mediates the biosynthesis of aspyridones. The polyketide-amino acid backbone preaspyridone A is first assembled by the PKS-NRPS hybrid apdA. The assembly of preaspyridone A is initiated by loading of malonyl-CoA onto apdA, followed by decarboxylation to yield the acetyl starter unit. The growing polyketide chain then elongates into a tetraketide. The adpA PKS module catalyzes three Claisen condensations, as well as beta-keto processing and methylation. Alpha-methylation step during polyketide synthesis is a prerequisite and a key checkpoint for chain transfer between PKS and NRPS modules. The downstream NRPS module contains the condensation (C), adenylation (A), and thiolation (T) domains and catalyzes the incorporation of tyrosine via the formation of the L-tyrosinyl-thioester and the amide linkage between L-tyrosinyl-thioester and the tetraketide. The bimodular assembly line is terminated with a reductase (R) domain that facilitates formation and release of the tetramic acid product. Because apdA lacks a designated enoylreductase (ER) domain, the required activity is provided the enoyl reductase apdC. ApdC appears to operate with different stereoselectivity in different PKS cycle. Combined with apdC, apdA is proposed to synthesize preaspyridone A via about 20 enzymatic steps. A number of oxidative steps performed successively by the cytochrome P450 monooxygenases apdE and apdB are required for the conversion of preaspyridone A to aspyridone A. The cytochrome P450 monooxygenase apdE is responsible for the oxidative dephenylation of preaspyridone A. Finally, the predicted FAD-dependent monooxygenase apdD and the acyl-CoA dehydrogenase apdG may be involved in the transformation of aspyridone A into aspyridone B. The chain is Hybrid PKS-NRPS synthetase apdA from Emericella nidulans (strain FGSC A4 / ATCC 38163 / CBS 112.46 / NRRL 194 / M139) (Aspergillus nidulans).